A 218-amino-acid chain; its full sequence is Phosphatidylserine decarboxylase proenzyme (218 aa).

Ser183 (schiff-base intermediate with substrate; via pyruvic acid) is an active-site residue. A Pyruvic acid (Ser); by autocatalysis modification is found at Ser183.

Belongs to the phosphatidylserine decarboxylase family. PSD-A subfamily. Heterodimer of a large membrane-associated beta subunit and a small pyruvoyl-containing alpha subunit. Requires pyruvate as cofactor. Post-translationally, is synthesized initially as an inactive proenzyme. Formation of the active enzyme involves a self-maturation process in which the active site pyruvoyl group is generated from an internal serine residue via an autocatalytic post-translational modification. Two non-identical subunits are generated from the proenzyme in this reaction, and the pyruvate is formed at the N-terminus of the alpha chain, which is derived from the carboxyl end of the proenzyme. The post-translation cleavage follows an unusual pathway, termed non-hydrolytic serinolysis, in which the side chain hydroxyl group of the serine supplies its oxygen atom to form the C-terminus of the beta chain, while the remainder of the serine residue undergoes an oxidative deamination to produce ammonia and the pyruvoyl prosthetic group on the alpha chain.

It is found in the cell membrane. The catalysed reaction is a 1,2-diacyl-sn-glycero-3-phospho-L-serine + H(+) = a 1,2-diacyl-sn-glycero-3-phosphoethanolamine + CO2. The protein operates within phospholipid metabolism; phosphatidylethanolamine biosynthesis; phosphatidylethanolamine from CDP-diacylglycerol: step 2/2. In terms of biological role, catalyzes the formation of phosphatidylethanolamine (PtdEtn) from phosphatidylserine (PtdSer). The polypeptide is Phosphatidylserine decarboxylase proenzyme (Magnetococcus marinus (strain ATCC BAA-1437 / JCM 17883 / MC-1)).